Reading from the N-terminus, the 381-residue chain is S-adenosylmethionine synthase (381 aa).

Position 15 (histidine 15) interacts with ATP. Aspartate 17 serves as a coordination point for Mg(2+). K(+) is bound at residue glutamate 43. L-methionine contacts are provided by glutamate 56 and glutamine 99. The tract at residues 99-109 (QSPDINQGVDR) is flexible loop. ATP-binding positions include 164–166 (DAK), 230–231 (RF), aspartate 239, 245–246 (RK), alanine 262, and lysine 266. Aspartate 239 is a binding site for L-methionine. Lysine 270 is a binding site for L-methionine.

Belongs to the AdoMet synthase family. Homotetramer; dimer of dimers. Requires Mg(2+) as cofactor. It depends on K(+) as a cofactor.

The protein resides in the cytoplasm. It catalyses the reaction L-methionine + ATP + H2O = S-adenosyl-L-methionine + phosphate + diphosphate. Its pathway is amino-acid biosynthesis; S-adenosyl-L-methionine biosynthesis; S-adenosyl-L-methionine from L-methionine: step 1/1. Its function is as follows. Catalyzes the formation of S-adenosylmethionine (AdoMet) from methionine and ATP. The overall synthetic reaction is composed of two sequential steps, AdoMet formation and the subsequent tripolyphosphate hydrolysis which occurs prior to release of AdoMet from the enzyme. This Alteromonas mediterranea (strain DSM 17117 / CIP 110805 / LMG 28347 / Deep ecotype) protein is S-adenosylmethionine synthase.